The sequence spans 291 residues: tRNA pseudouridine synthase-like 1 (291 aa).

The active-site Nucleophile is Asp66. Tyr130 provides a ligand contact to substrate.

Belongs to the tRNA pseudouridine synthase TruA family.

The catalysed reaction is a uridine in tRNA = a pseudouridine in tRNA. The sequence is that of tRNA pseudouridine synthase-like 1 (Pusl1) from Mus musculus (Mouse).